Here is a 184-residue protein sequence, read N- to C-terminus: ATP synthase subunit b, chloroplastic (184 aa).

The chain crosses the membrane as a helical span at residues 27 to 49 (LATNPINLSVVLGVLIFFGKGVL).

It belongs to the ATPase B chain family. As to quaternary structure, F-type ATPases have 2 components, F(1) - the catalytic core - and F(0) - the membrane proton channel. F(1) has five subunits: alpha(3), beta(3), gamma(1), delta(1), epsilon(1). F(0) has four main subunits: a(1), b(1), b'(1) and c(10-14). The alpha and beta chains form an alternating ring which encloses part of the gamma chain. F(1) is attached to F(0) by a central stalk formed by the gamma and epsilon chains, while a peripheral stalk is formed by the delta, b and b' chains.

The protein localises to the plastid. It is found in the chloroplast thylakoid membrane. In terms of biological role, f(1)F(0) ATP synthase produces ATP from ADP in the presence of a proton or sodium gradient. F-type ATPases consist of two structural domains, F(1) containing the extramembraneous catalytic core and F(0) containing the membrane proton channel, linked together by a central stalk and a peripheral stalk. During catalysis, ATP synthesis in the catalytic domain of F(1) is coupled via a rotary mechanism of the central stalk subunits to proton translocation. Its function is as follows. Component of the F(0) channel, it forms part of the peripheral stalk, linking F(1) to F(0). This chain is ATP synthase subunit b, chloroplastic, found in Nicotiana sylvestris (Wood tobacco).